The sequence spans 380 residues: Cytoplasmic protein NCK2 (380 aa).

The residue at position 2 (T2) is an N-acetylthreonine. Residues 2–61 (TEEVIVIAKWDYTAQQDQELDIKKNERLWLLDDSKTWWRVRNAANRTGYVPSNYVERKNS) enclose the SH3 1 domain. The disordered stretch occupies residues 79 to 102 (KTRRKTSARDASPTPSTDAEYPAN). S90 is modified (phosphoserine). Residue T92 is modified to Phosphothreonine. Residue S94 is modified to Phosphoserine. Residue Y110 is modified to Phosphotyrosine. 2 SH3 domains span residues 111 to 170 (DLNI…EEVD) and 195 to 257 (RVLH…VLSD). One can recognise an SH2 domain in the interval 285 to 380 (WYYGNVTRHQ…EKLYLVRALQ (96 aa)).

In terms of assembly, interacts with DOCK1, LIMS1 and TGFB1I1. Part of a complex containing PPP1R15B, PP1 and NCK2. Interacts with FASLG. Interacts with AXL. Interacts with PAK1, PKN2 and SOS1. Interacts (via SH2 domain) with EGFR. Interacts (via SH2 domain) with DDR1. Interacts with IRS1. In terms of processing, phosphorylated. In terms of tissue distribution, ubiquitous.

It is found in the cytoplasm. The protein localises to the endoplasmic reticulum. Its function is as follows. Adapter protein which associates with tyrosine-phosphorylated growth factor receptors or their cellular substrates. Maintains low levels of EIF2S1 phosphorylation by promoting its dephosphorylation by PP1. Plays a role in ELK1-dependent transcriptional activation in response to activated Ras signaling. The chain is Cytoplasmic protein NCK2 (NCK2) from Homo sapiens (Human).